We begin with the raw amino-acid sequence, 229 residues long: Acidic leucine-rich nuclear phosphoprotein 32-related protein 1 (229 aa).

4 LRR repeats span residues 19–40 (TVDTLFLDNAEDGQIGGLTDQL), 42–63 (NLEMLSMVKCGLTTLAGFPTLP), 64–85 (ALTYLDISDNQLGDNASFDVLV), and 90–110 (DLKKITLASNKLSLDNLRCLK). An LRRCT domain is found at 124–164 (PSLGLLEDYREKMFEMIPSLKILDGCDVDGEEVEEEFAGEG). Residues 155 to 177 (EVEEEFAGEGGEDSEEGSGDEDG) show a composition bias toward acidic residues. The disordered stretch occupies residues 155 to 229 (EVEEEFAGEG…DNKKAAGDDE (75 aa)). Over residues 219 to 229 (PDNKKAAGDDE) the composition is skewed to basic and acidic residues.

This sequence belongs to the ANP32 family.

The protein is Acidic leucine-rich nuclear phosphoprotein 32-related protein 1 of Caenorhabditis elegans.